The sequence spans 392 residues: Phosphoprotein (392 aa).

Disordered stretches follow at residues 61–107 (ESTN…GLDS) and 152–182 (PIAT…DGWE). Residues 217–280 (LNVNEILNTV…ITTVKIMDPG (64 aa)) are multimerization. Residues 219 to 246 (VNEILNTVRNLDSRMNQLETKVDRILSS) adopt a coiled-coil conformation.

It belongs to the rubulavirus/avulavirus P protein family. In terms of assembly, homotetramer. Interacts (via multimerization domain) with polymerase L; this interaction forms the polymerase L-P complex. Interacts (via N-terminus) with N0 (via Ncore); this interaction allows P to chaperon N0 to avoid N polymerization before encapsidation. Interacts (via C-terminus) with N-RNA template; this interaction positions the polymerase on the template for both transcription and replication.

In terms of biological role, essential cofactor of the RNA polymerase L that plays a central role in the transcription and replication by forming the polymerase complex with RNA polymerase L and recruiting L to the genomic N-RNA template for RNA synthesis. Also plays a central role in the encapsidation of nascent RNA chains by forming the encapsidation complex with the nucleocapsid protein N (N-P complex). Acts as a chaperone for newly synthesized free N protein, so-called N0, allowing encapsidation of nascent RNA chains during replication. The nucleoprotein protein N prevents excessive phosphorylation of P, which leads to down-regulation of viral transcription/ replication. Participates, together with N, in the formation of viral factories (viroplasms), which are large inclusions in the host cytoplasm where replication takes place. The polypeptide is Phosphoprotein (P/V) (Canis lupus familiaris (Dog)).